The primary structure comprises 404 residues: Argininosuccinate synthase (404 aa).

9–17 (AYSGGLDTS) contributes to the ATP binding site. An L-citrulline-binding site is contributed by tyrosine 86. Glycine 116 contributes to the ATP binding site. The L-aspartate site is built by threonine 118, asparagine 122, and aspartate 123. Asparagine 122 serves as a coordination point for L-citrulline. L-citrulline is bound by residues arginine 126, serine 174, serine 183, glutamate 259, and tyrosine 271.

This sequence belongs to the argininosuccinate synthase family. Type 1 subfamily. Homotetramer.

It is found in the cytoplasm. The enzyme catalyses L-citrulline + L-aspartate + ATP = 2-(N(omega)-L-arginino)succinate + AMP + diphosphate + H(+). It participates in amino-acid biosynthesis; L-arginine biosynthesis; L-arginine from L-ornithine and carbamoyl phosphate: step 2/3. The polypeptide is Argininosuccinate synthase (Listeria welshimeri serovar 6b (strain ATCC 35897 / DSM 20650 / CCUG 15529 / CIP 8149 / NCTC 11857 / SLCC 5334 / V8)).